Consider the following 132-residue polypeptide: Small ribosomal subunit protein uS11 (132 aa).

This sequence belongs to the universal ribosomal protein uS11 family. As to quaternary structure, part of the 30S ribosomal subunit. Interacts with proteins S7 and S18. Binds to IF-3.

Its function is as follows. Located on the platform of the 30S subunit, it bridges several disparate RNA helices of the 16S rRNA. Forms part of the Shine-Dalgarno cleft in the 70S ribosome. The sequence is that of Small ribosomal subunit protein uS11 from Oenococcus oeni (strain ATCC BAA-331 / PSU-1).